The sequence spans 211 residues: Cytidylate kinase (211 aa).

7 to 15 (GPAASGKGT) provides a ligand contact to ATP.

Belongs to the cytidylate kinase family. Type 1 subfamily.

The protein resides in the cytoplasm. It carries out the reaction CMP + ATP = CDP + ADP. It catalyses the reaction dCMP + ATP = dCDP + ADP. The sequence is that of Cytidylate kinase from Rhodopseudomonas palustris (strain BisA53).